A 157-amino-acid chain; its full sequence is Protein-export protein SecB (157 aa).

It belongs to the SecB family. In terms of assembly, homotetramer, a dimer of dimers. One homotetramer interacts with 1 SecA dimer.

It is found in the cytoplasm. Functionally, one of the proteins required for the normal export of preproteins out of the cell cytoplasm. It is a molecular chaperone that binds to a subset of precursor proteins, maintaining them in a translocation-competent state. It also specifically binds to its receptor SecA. This chain is Protein-export protein SecB, found in Photobacterium profundum (strain SS9).